Consider the following 392-residue polypeptide: Phosphoglycerate kinase (392 aa).

Residues 21–23, Arg36, 59–62, Arg113, and Arg146 contribute to the substrate site; these read DFN and HLGR. ATP-binding positions include Lys197, Glu319, and 345-348; that span reads GGDT.

It belongs to the phosphoglycerate kinase family. Monomer.

The protein resides in the cytoplasm. It carries out the reaction (2R)-3-phosphoglycerate + ATP = (2R)-3-phospho-glyceroyl phosphate + ADP. The protein operates within carbohydrate degradation; glycolysis; pyruvate from D-glyceraldehyde 3-phosphate: step 2/5. This Francisella philomiragia subsp. philomiragia (strain ATCC 25017 / CCUG 19701 / FSC 153 / O#319-036) protein is Phosphoglycerate kinase.